The primary structure comprises 822 residues: IQ and AAA domain-containing protein 1-like (822 aa).

An IQ domain is found at 206–235 (QDQGAIVIQKVWKGYLQRKRIEQDRRMEME). Positions 338–363 (RQELEAQAQENKKKEQEKNKDKVKEK) are enriched in basic and acidic residues. 2 disordered regions span residues 338-378 (RQEL…KAKK) and 457-484 (REET…KDLT). The span at 464-479 (KSPKKKGGKKSGKKKK) shows a compositional bias: basic residues. Residue 569 to 576 (GPSGMGKK) coordinates ATP.

This sequence belongs to the AAA ATPase family.

The polypeptide is IQ and AAA domain-containing protein 1-like (Iqca1l) (Rattus norvegicus (Rat)).